Reading from the N-terminus, the 531-residue chain is 2,3-bisphosphoglycerate-independent phosphoglycerate mutase (531 aa).

2 residues coordinate Mn(2+): Asp13 and Ser63. Residue Ser63 is the Phosphoserine intermediate of the active site. Residues His124, 154–155 (RD), Arg187, Arg193, 261–264 (RPDR), and Lys342 each bind substrate. Residues Asp420, His424, Asp462, His463, and His480 each contribute to the Mn(2+) site.

Belongs to the BPG-independent phosphoglycerate mutase family. As to quaternary structure, monomer. Requires Mn(2+) as cofactor.

It carries out the reaction (2R)-2-phosphoglycerate = (2R)-3-phosphoglycerate. The protein operates within carbohydrate degradation; glycolysis; pyruvate from D-glyceraldehyde 3-phosphate: step 3/5. Functionally, catalyzes the interconversion of 2-phosphoglycerate and 3-phosphoglycerate. In Mycoplasma capricolum subsp. capricolum (strain California kid / ATCC 27343 / NCTC 10154), this protein is 2,3-bisphosphoglycerate-independent phosphoglycerate mutase.